The sequence spans 55 residues: MAKAVTIKIKLVSTADTGFYYVSKKNSRTMTDKMVKRKYDPVARKHVEFKEAKIK.

It belongs to the bacterial ribosomal protein bL33 family.

The sequence is that of Large ribosomal subunit protein bL33 from Rhodopseudomonas palustris (strain BisA53).